A 1176-amino-acid polypeptide reads, in one-letter code: Pesticidal crystal protein Cry1Aa (1176 aa).

The protein belongs to the delta endotoxin family.

Its function is as follows. Promotes colloidosmotic lysis by binding to the midgut epithelial cells of many lepidopteran larvae. This Bacillus thuringiensis subsp. aizawai protein is Pesticidal crystal protein Cry1Aa (cry1Aa).